Consider the following 335-residue polypeptide: MQTSQLFTALQQRQRQRDYRYLTGLVVMLLFALLISLCAGDVWIWPEHWFSESGKLFVWQLRLPRSMAVIMVGASLAVSGAVMQALFENPLAEPGLLGVANGAGVALVTAVLLGHGLLPIWVLSTCAIIGALLMTSILLSFTRRRLLTNAQLLLVGVALGIICSAMMTWAVYFSTSLDLRQLMYWMMGGFSGVDWRQQSLVLALLPTVIWLCCQGRVLNFMSLGEQQARQLGVSLHLWRNLLVLAIGLLVGISVALAGVISFIGLVIPHILRLTGLTDQRRLLAGCAFAGGGVLLLADVVARTVLSSAELPIGVVTATLGSPLFIWLLIRVKGVK.

Transmembrane regions (helical) follow at residues 25–45 (LVVMLLFALLISLCAGDVWIW), 67–87 (MAVIMVGASLAVSGAVMQALF), 94–113 (PGLLGVANGAGVALVTAVLL), 117–139 (LLPIWVLSTCAIIGALLMTSILL), 153–173 (LLVGVALGIICSAMMTWAVYF), 243–263 (VLAIGLLVGISVALAGVISFI), 281–301 (RLLAGCAFAGGGVLLLADVVA), and 309–329 (ELPIGVVTATLGSPLFIWLLI).

This sequence belongs to the binding-protein-dependent transport system permease family. FecCD subfamily. In terms of assembly, the complex is composed of two ATP-binding proteins (BtuD), two transmembrane proteins (BtuC) and a solute-binding protein (BtuF).

The protein resides in the cell inner membrane. Part of the ABC transporter complex BtuCDF involved in vitamin B12 import. Involved in the translocation of the substrate across the membrane. The sequence is that of Vitamin B12 import system permease protein BtuC from Yersinia pseudotuberculosis serotype O:1b (strain IP 31758).